A 393-amino-acid polypeptide reads, in one-letter code: Putative mitogen-activated protein kinase kinase kinase 7-like (393 aa).

The Protein kinase domain maps to 11-266; sequence KLSEKFLGAG…PSMKEIEKFL (256 aa). ATP contacts are provided by residues 17–25 and K38; that span reads LGAGSGGAV. D133 serves as the catalytic Proton acceptor. A disordered region spans residues 339-379; it reads AAADGDREVRRAEKDTERETSRAAHNGERETRRAGQDVGRE.

It belongs to the protein kinase superfamily. STE Ser/Thr protein kinase family. MAP kinase kinase kinase subfamily. Mg(2+) serves as cofactor.

The catalysed reaction is L-seryl-[protein] + ATP = O-phospho-L-seryl-[protein] + ADP + H(+). The enzyme catalyses L-threonyl-[protein] + ATP = O-phospho-L-threonyl-[protein] + ADP + H(+). This is Putative mitogen-activated protein kinase kinase kinase 7-like (Takl1) from Drosophila melanogaster (Fruit fly).